The primary structure comprises 284 residues: Proton-translocating ferredoxin:NAD(+) oxidoreductase complex subunit B (284 aa).

The interval Met1 to Asn26 is hydrophobic. Residues Glu32–Lys92 form the 4Fe-4S domain. Positions 49, 52, 57, 75, 138, 142, 148, 152, 172, 175, 178, 182, 217, 220, 223, 227, 246, 249, 254, and 258 each coordinate [4Fe-4S] cluster. 4Fe-4S ferredoxin-type domains are found at residues Gly133 to Asn162, Gly163 to Val192, Gly206 to Asn237, and Ala239 to Gly269.

It belongs to the 4Fe4S bacterial-type ferredoxin family. RnfB subfamily. The complex is composed of six subunits: RnfA, RnfB, RnfC, RnfD, RnfE and RnfG. Requires [4Fe-4S] cluster as cofactor.

The protein resides in the cell membrane. Its function is as follows. Part of a membrane-bound complex that couples electron transfer with translocation of ions across the membrane. Couples electron transfer from reduced ferredoxin to NAD(+) with translocation of H(+) out of the cell. Essential for energy conservation during autotrophic growth. Contributes to ATP synthesis during heterotrophic growth. In Clostridium ljungdahlii (strain ATCC 55383 / DSM 13528 / PETC), this protein is Proton-translocating ferredoxin:NAD(+) oxidoreductase complex subunit B.